Reading from the N-terminus, the 447-residue chain is Protein cereblon (447 aa).

Acidic residues-rich tracts occupy residues 1-10 (MADDEGEEDP) and 25-34 (ESEEEDEMEL). The tract at residues 1 to 47 (MADDEGEEDPGINNMGNLLQVISSESEEEDEMELEDAKTADSESPNI) is disordered. In terms of domain architecture, Lon N-terminal spans 82 to 322 (IPVLPHVQVM…CELDIMSKCT (241 aa)). In terms of domain architecture, CULT spans 321–429 (CTSLCCKHCP…LTRSALQPRI (109 aa)). The Zn(2+) site is built by cysteine 326 and cysteine 329. (S)-thalidomide is bound by residues tryptophan 383 and tryptophan 389. Cysteine 394 and cysteine 397 together coordinate Zn(2+).

This sequence belongs to the CRBN family. Component of a DCX (DDB1-CUL4-X-box) protein ligase complex.

Its subcellular location is the cytoplasm. The protein resides in the nucleus. The protein operates within protein modification; protein ubiquitination. Functionally, substrate recognition component of a DCX (DDB1-CUL4-X-box) E3 protein ligase complex that mediates the ubiquitination and subsequent proteasomal degradation of target proteins, such as MEIS2. Normal degradation of key regulatory proteins is required for normal limb outgrowth and expression of the fibroblast growth factor FGF8. Maintains presynaptic glutamate release and consequently cognitive functions, such as memory and learning, by negatively regulating large-conductance calcium-activated potassium (BK) channels in excitatory neurons. Likely to function by regulating the assembly and neuronal surface expression of BK channels via its interaction with KCNT1. May also be involved in regulating anxiety-like behaviors via a BK channel-independent mechanism. This is Protein cereblon (crbn) from Xenopus tropicalis (Western clawed frog).